A 252-amino-acid chain; its full sequence is 14-3-3 protein 7 (252 aa).

It belongs to the 14-3-3 family. Homodimer.

In Solanum lycopersicum (Tomato), this protein is 14-3-3 protein 7 (TFT7).